Reading from the N-terminus, the 880-residue chain is Alanine--tRNA ligase (880 aa).

The Zn(2+) site is built by His566, His570, Cys668, and His672.

It belongs to the class-II aminoacyl-tRNA synthetase family. The cofactor is Zn(2+).

It is found in the cytoplasm. The catalysed reaction is tRNA(Ala) + L-alanine + ATP = L-alanyl-tRNA(Ala) + AMP + diphosphate. Functionally, catalyzes the attachment of alanine to tRNA(Ala) in a two-step reaction: alanine is first activated by ATP to form Ala-AMP and then transferred to the acceptor end of tRNA(Ala). Also edits incorrectly charged Ser-tRNA(Ala) and Gly-tRNA(Ala) via its editing domain. This chain is Alanine--tRNA ligase, found in Nostoc sp. (strain PCC 7120 / SAG 25.82 / UTEX 2576).